The following is a 645-amino-acid chain: E3 ubiquitin-protein ligase ORTHRUS 2 (645 aa).

A PHD-type zinc finger spans residues 12-63 (DGVCMRCKSNPPPEESLTCGTCVTPWHVSCLSSPPKTLASTLQWHCPDCSGE). The segment at 96-133 (LSTEEKAKMRQRLLSGKGVEEDDEEEKRKKKGKGKNPN) is disordered. The RING-type 1 zinc-finger motif lies at 146–185 (CSFCMQLPERPVTKPCGHNACLKCFEKWMGQGKRTCGKCR). One can recognise a YDG domain in the interval 273-422 (VRNQGLLVGE…FKVCRYLFVR (150 aa)). The RING-type 2 zinc finger occupies 518–575 (CQICQQVLTLPVTTPCAHNFCKACLEAKFAGKTLVRERSTGGRTLRSRKNVLNCPCCP). A coiled-coil region spans residues 583-613 (QNPQVNREVAEVIEKLKTQEEDTAELEDEDE). Residues 599 to 645 (KTQEEDTAELEDEDEGECSGTTPEEDSEQPKKRIKLDTDATVSATIR) form a disordered region. The segment covering 603-625 (EDTAELEDEDEGECSGTTPEEDS) has biased composition (acidic residues). Positions 626 to 636 (EQPKKRIKLDT) are enriched in basic and acidic residues.

In terms of assembly, interacts with histones CENH3, HTB2, HTR3 and H4. In terms of tissue distribution, mostly expressed in inflorescence and, to a lower extent, in leaves.

It localises to the nucleus. The enzyme catalyses S-ubiquitinyl-[E2 ubiquitin-conjugating enzyme]-L-cysteine + [acceptor protein]-L-lysine = [E2 ubiquitin-conjugating enzyme]-L-cysteine + N(6)-ubiquitinyl-[acceptor protein]-L-lysine.. It functions in the pathway protein modification; protein ubiquitination. E3 ubiquitin-protein ligase. Participates in CpG methylation-dependent transcriptional regulation and epigenetic transcriptional silencing. Mediates ubiquitination with the E2 ubiquitin-conjugating enzyme UBC11. Promotes methylation-mediated gene silencing leading, for example, to early flowering. Associates with methylated DNA, and can bind to CpG, CpNpG, and CpNpN DNA motifs, with a strong preference for methylated forms, and with highest affinity for CpG substrate. Probably acts at the DNA methylation?histone interface to maintain centromeric heterochromatin. In Arabidopsis thaliana (Mouse-ear cress), this protein is E3 ubiquitin-protein ligase ORTHRUS 2 (ORTH2).